An 879-amino-acid polypeptide reads, in one-letter code: Paramyosin, long form (879 aa).

Residues 1–31 (MSSSQAVRSSKYSYRATSTGPGTADVNIEYI) form a nonhelical region region. The residue at position 18 (Ser18) is a Phosphoserine. Residues 32–858 (QDLSSLSRLE…IIRAKHRTFV (827 aa)) are a coiled coil. Positions 859–879 (TTSTVPGSQVYIQETTRTITE) are nonhelical region.

Belongs to the paramyosin family. Heterodimer of two isoforms. Post-translationally, the more-acidic and less-abundant isoform is phosphorylated. Expressed in all larval and adult muscle tissues. Expression is five times higher in tubular than in fibrillar muscles.

It localises to the cytoplasm. Its subcellular location is the myofibril. Its function is as follows. Paramyosin is a major structural component of many thick filaments isolated from invertebrate muscles. This is Paramyosin, long form (Prm) from Drosophila melanogaster (Fruit fly).